A 630-amino-acid chain; its full sequence is Protein mono-ADP-ribosyltransferase PARP6 (630 aa).

The residue at position 237 (cysteine 237) is an ADP-ribosylcysteine. A PARP catalytic domain is found at 394–620 (EMTQGSYLEI…QDPKIQKEIM (227 aa)). The residue at position 600 (aspartate 600) is an ADP-ribosyl aspartic acid.

This sequence belongs to the ARTD/PARP family. Auto-mono-ADP-ribosylated.

It carries out the reaction L-aspartyl-[protein] + NAD(+) = 4-O-(ADP-D-ribosyl)-L-aspartyl-[protein] + nicotinamide. It catalyses the reaction L-cysteinyl-[protein] + NAD(+) = S-(ADP-D-ribosyl)-L-cysteinyl-[protein] + nicotinamide + H(+). Its function is as follows. Mono-ADP-ribosyltransferase that mediates mono-ADP-ribosylation of target proteins. The chain is Protein mono-ADP-ribosyltransferase PARP6 from Mus musculus (Mouse).